The following is an 80-amino-acid chain: MKSLILWSIKGYRRWISPLFPPSCRFQPTCSQYALEAVERFGVLRGSWLALKRLGRCHPFHPGGYDPVPHLCHHDLDNTP.

The protein belongs to the UPF0161 family.

It is found in the cell inner membrane. Functionally, could be involved in insertion of integral membrane proteins into the membrane. The polypeptide is Putative membrane protein insertion efficiency factor (Picosynechococcus sp. (strain ATCC 27264 / PCC 7002 / PR-6) (Agmenellum quadruplicatum)).